Consider the following 634-residue polypeptide: Threonine--tRNA ligase (634 aa).

One can recognise a TGS domain in the interval 1–61 (MINIRFPDGS…NSNCELRLIT (61 aa)). The segment at 241 to 532 (DHRKIGKVLD…LIEHYAGNLP (292 aa)) is catalytic. Zn(2+) contacts are provided by Cys332, His383, and His509.

Belongs to the class-II aminoacyl-tRNA synthetase family. Homodimer. Zn(2+) serves as cofactor.

The protein resides in the cytoplasm. The enzyme catalyses tRNA(Thr) + L-threonine + ATP = L-threonyl-tRNA(Thr) + AMP + diphosphate + H(+). In terms of biological role, catalyzes the attachment of threonine to tRNA(Thr) in a two-step reaction: L-threonine is first activated by ATP to form Thr-AMP and then transferred to the acceptor end of tRNA(Thr). Also edits incorrectly charged L-seryl-tRNA(Thr). The protein is Threonine--tRNA ligase of Francisella tularensis subsp. tularensis (strain WY96-3418).